The chain runs to 237 residues: Protein GrpE (237 aa).

Disordered stretches follow at residues E27–T51 and A202–S237. 2 stretches are compositionally biased toward low complexity: residues A33–S45 and S204–S213. Polar residues predominate over residues T227–S237.

It belongs to the GrpE family. In terms of assembly, homodimer.

It is found in the cytoplasm. Participates actively in the response to hyperosmotic and heat shock by preventing the aggregation of stress-denatured proteins, in association with DnaK and GrpE. It is the nucleotide exchange factor for DnaK and may function as a thermosensor. Unfolded proteins bind initially to DnaJ; upon interaction with the DnaJ-bound protein, DnaK hydrolyzes its bound ATP, resulting in the formation of a stable complex. GrpE releases ADP from DnaK; ATP binding to DnaK triggers the release of the substrate protein, thus completing the reaction cycle. Several rounds of ATP-dependent interactions between DnaJ, DnaK and GrpE are required for fully efficient folding. This is Protein GrpE from Synechococcus sp. (strain JA-3-3Ab) (Cyanobacteria bacterium Yellowstone A-Prime).